We begin with the raw amino-acid sequence, 466 residues long: 3-isopropylmalate dehydratase large subunit (466 aa).

3 residues coordinate [4Fe-4S] cluster: cysteine 346, cysteine 406, and cysteine 409.

The protein belongs to the aconitase/IPM isomerase family. LeuC type 1 subfamily. Heterodimer of LeuC and LeuD. It depends on [4Fe-4S] cluster as a cofactor.

It catalyses the reaction (2R,3S)-3-isopropylmalate = (2S)-2-isopropylmalate. The protein operates within amino-acid biosynthesis; L-leucine biosynthesis; L-leucine from 3-methyl-2-oxobutanoate: step 2/4. Its function is as follows. Catalyzes the isomerization between 2-isopropylmalate and 3-isopropylmalate, via the formation of 2-isopropylmaleate. The chain is 3-isopropylmalate dehydratase large subunit from Alteromonas mediterranea (strain DSM 17117 / CIP 110805 / LMG 28347 / Deep ecotype).